The sequence spans 1272 residues: MRIERRFTKPGQSSYAEIEFRKAVSEIKNPDGSVVFRLADIDVPAQFSQVATDVLAQKYFRKAGVPKLLKKVEENDVPSFLWRSVADEKALKELPEAERYGSETDARQVFDRLAGTWAYWGWKGKYFSTEEDASAFKDELAYMLATQRVAPNSPQWFNTGLHWAYGIDGPGQGHFYVDPFTGKLTKSKSAYEHPQPHACFIQSVEDDLVNEGGIMDLWVREARLFKYGSGTGSNFSYLRGEGEKLSGGGKSSGLMSFLKIGDRAAGAIKSGGTTRRAAKMVVVDADHPDIEAYIDWKVNEEQKVAALVTGSKIVAKHLKAIMKACVNCEADNGDCFDPAKNPALKREIRAAKKDMVPENYVKRVIQFAEQGYKDIQFKTYDTDWDSEAYLTVSGQNSNNSVSLKDDFLRAVENDGNWNLTARKDGKVMKTLKARDLWEKISHAAWASADPGLHFNTTMNDWHTSPAEGPIRASNPCSEYMFLDDTACNLASLNLLQFKDAKTKRIDIADYEHAVRLWTVVLEVSVMMAQFPSRQIAERSYEYRTLGLGYANIGGLLMSSGIPYDSDEGRAIAGALTAIMTGVSYATSAEMAGELGPFPSFAPNRDNMLRVIRNHRRAAHGQSEGYEGLSVNPVALIHADCTDQDLVAHATAAWDKALELGEKHGYRNAQTTVIAPTGTIGLVMDCDTTGIEPDFALVKFKKLAGGGYFKIINRAVPESLRSLGYSESQIAEIEAYAVGHGNLNQAPAINPSTLKAKGFTDEKIEAVNAALKSAFDIKFVFNQWTLGADFLKGTLKVSDEQLSDMSFNLLDHLGFAKKDIEAANVHVCGAMTLEGAPFLKNEHLAVFDCANPCGKIGKRYLSVESHIRMMAAAQPFISGAISKTINMPNDATVEDCGAAYMLSWKLALKANALYRDGSKLSQPLNASLVEDEDDEDFVEELIQQPLAQQAVTITEKIVERVIERVSREREKLPNRRQGYTQKATVGGHKVYLRTGEFGDGRIGEIFIDMHKEGAAFRAMMNNFAIAISLGLQYGVPLEEYVEAFTFTKFEPAGMVQGNDAIKNATSILDYVFRELAVSYLGRHDLAHVDTSDFSNTALGKGIQEGKTNLLSTGWTRGYKPTLVSSNEGDRAASEPKGSATAAPARGSANVTSFAGSAARKLEPTVAITTSEIVSFKRDYEERAKELAEEIAEEVIDEVVQEAQQTATALFSDKAAADAASAKAEAKKKENERRMRSIAQGYTGNMCSECQNFTMVRNGTCEKCDTCGATSGCS.

Substrate-binding positions include serine 153, alanine 198 to cysteine 199, glycine 230, asparagine 474 to glutamate 478, and proline 675 to isoleucine 679. Cysteine 199 and cysteine 487 are oxidised to a cystine. Residue asparagine 474 is the Proton acceptor of the active site. Cysteine 476 (cysteine radical intermediate) is an active-site residue. Residue glutamate 478 is the Proton acceptor of the active site. Positions threonine 1120 to alanine 1147 are disordered.

This sequence belongs to the ribonucleoside diphosphate reductase class-2 family. Adenosylcob(III)alamin serves as cofactor.

The catalysed reaction is a 2'-deoxyribonucleoside 5'-diphosphate + [thioredoxin]-disulfide + H2O = a ribonucleoside 5'-diphosphate + [thioredoxin]-dithiol. Its function is as follows. Catalyzes the reduction of ribonucleotides to deoxyribonucleotides. May function to provide a pool of deoxyribonucleotide precursors for DNA repair during oxygen limitation and/or for immediate growth after restoration of oxygen. The protein is Vitamin B12-dependent ribonucleotide reductase (nrdJ) of Agrobacterium fabrum (strain C58 / ATCC 33970) (Agrobacterium tumefaciens (strain C58)).